We begin with the raw amino-acid sequence, 239 residues long: Ribonuclease 3 (239 aa).

Residues 11-133 (HAAIQKKLGY…MFAAVSFDAD (123 aa)) form the RNase III domain. A Mg(2+)-binding site is contributed by Glu-46. Asp-50 is a catalytic residue. 2 residues coordinate Mg(2+): Asp-119 and Glu-122. Residue Glu-122 is part of the active site. Residues 160-230 (DGKTALQEAL…AKEALKWLEE (71 aa)) form the DRBM domain.

The protein belongs to the ribonuclease III family. As to quaternary structure, homodimer. Mg(2+) serves as cofactor.

It localises to the cytoplasm. The enzyme catalyses Endonucleolytic cleavage to 5'-phosphomonoester.. Digests double-stranded RNA. Involved in the processing of primary rRNA transcript to yield the immediate precursors to the large and small rRNAs (23S and 16S). Also processes some mRNAs, and tRNAs when they are encoded in the rRNA operon. Functionally, CRISPR (clustered regularly interspaced short palindromic repeat) is an adaptive immune system that provides protection against mobile genetic elements (viruses, transposable elements and conjugative plasmids). CRISPR clusters contain spacers, sequences complementary to antecedent mobile elements, and target invading nucleic acids. CRISPR clusters are transcribed and processed into CRISPR RNA (crRNA). In this organism endogenous ribonuclease 3 and Cas9 are required for correct coprocessing of pre-crRNA and the trans-encoded small RNA (tracrRNA). Cas9, crRNA and tracrRNA are required for cleavage of invading DNA. Complements pre-crRNA and tracrRNA coprocessing defects in an rnc deletion in S.pyogenes strain 370. This Neisseria meningitidis serogroup A / serotype 4A (strain DSM 15465 / Z2491) protein is Ribonuclease 3.